The following is a 464-amino-acid chain: Argininosuccinate lyase (464 aa).

This sequence belongs to the lyase 1 family. Argininosuccinate lyase subfamily.

The protein resides in the cytoplasm. The catalysed reaction is 2-(N(omega)-L-arginino)succinate = fumarate + L-arginine. It participates in amino-acid biosynthesis; L-arginine biosynthesis; L-arginine from L-ornithine and carbamoyl phosphate: step 3/3. The sequence is that of Argininosuccinate lyase from Pseudomonas aeruginosa (strain UCBPP-PA14).